The sequence spans 281 residues: TIP41-like protein (281 aa).

It belongs to the TIP41 family.

The polypeptide is TIP41-like protein (Caenorhabditis elegans).